We begin with the raw amino-acid sequence, 263 residues long: 7beta-hydroxysteroid dehydrogenase (263 aa).

NADP(+) is bound by residues 17-21, 40-41, and 66-67; these read TEGVG, RR, and DF. Y156 serves as the catalytic Proton acceptor. NADP(+) is bound at residue S240.

The protein belongs to the short-chain dehydrogenases/reductases (SDR) family. As to quaternary structure, homodimer.

It carries out the reaction a 7beta-hydroxysteroid + NADP(+) = a 7-oxosteroid + NADPH + H(+). The catalysed reaction is 7-oxolithocholate + NADPH + H(+) = ursodeoxycholate + NADP(+). It catalyses the reaction 7beta-hydroxy-3,12-dioxo-5beta-cholan-24-oate + NADP(+) = dehydrocholate + NADPH + H(+). The enzyme catalyses ursocholate + NADP(+) = 3alpha,12alpha-dihydroxy-7-oxo-5beta-cholanate + NADPH + H(+). Functionally, 7beta-hydroxysteroid dehydrogenase that catalyzes the reduction of the 7-oxo group of 7-oxo-lithocholate (7-oxo-LCA), to yield ursodeoxycholate (UDCA). As C.aerofaciens is an intestinal bacterium, this enzyme probably contributes to the formation of UDCA in the human colon. UDCA is regarded as a chemopreventive beneficial secondary bile acid due to its low hydrophobicity; it protects hepatocytes and bile duct epithelial cells against necrosis and apoptosis induced by more hydrophobic secondary bile acids like deoxycholate (DCA). This enzyme is also able to catalyze the reverse reaction, i.e. the oxidation of the 7beta-hydroxy group of UDCA to 7-oxo-LCA. To a lesser extent, is also active on the taurine- and glycine-conjugates of ursodeoxycholate. It is specific for NADPH/NADP(+) as the electron acceptor/donor since it is not active with NADH/NAD(+). In the presence of NADPH, 7beta-HSDH can also reduce dehydrocholate. And is also able to oxidize ursocholate. The polypeptide is 7beta-hydroxysteroid dehydrogenase (Collinsella aerofaciens (strain ATCC 25986 / DSM 3979 / JCM 10188 / KCTC 3647 / NCTC 11838 / VPI 1003)).